Consider the following 152-residue polypeptide: Lipoprotein signal peptidase (152 aa).

2 helical membrane passes run asparagine 55–methionine 75 and leucine 85–phenylalanine 105. Active-site residues include aspartate 111 and aspartate 129. The chain crosses the membrane as a helical span at residues valine 124–leucine 144.

The protein belongs to the peptidase A8 family.

The protein localises to the cell membrane. The enzyme catalyses Release of signal peptides from bacterial membrane prolipoproteins. Hydrolyzes -Xaa-Yaa-Zaa-|-(S,diacylglyceryl)Cys-, in which Xaa is hydrophobic (preferably Leu), and Yaa (Ala or Ser) and Zaa (Gly or Ala) have small, neutral side chains.. Its pathway is protein modification; lipoprotein biosynthesis (signal peptide cleavage). Its function is as follows. This protein specifically catalyzes the removal of signal peptides from prolipoproteins. In Bacillus cereus (strain B4264), this protein is Lipoprotein signal peptidase.